We begin with the raw amino-acid sequence, 392 residues long: Chorismate synthase (392 aa).

The NADP(+) site is built by Arg39 and Arg45. FMN is bound by residues 128-130, 248-249, Gly300, 315-319, and Arg341; these read RSS, QA, and KPIPT.

Belongs to the chorismate synthase family. Homotetramer. FMNH2 is required as a cofactor.

It catalyses the reaction 5-O-(1-carboxyvinyl)-3-phosphoshikimate = chorismate + phosphate. Its pathway is metabolic intermediate biosynthesis; chorismate biosynthesis; chorismate from D-erythrose 4-phosphate and phosphoenolpyruvate: step 7/7. Functionally, catalyzes the anti-1,4-elimination of the C-3 phosphate and the C-6 proR hydrogen from 5-enolpyruvylshikimate-3-phosphate (EPSP) to yield chorismate, which is the branch point compound that serves as the starting substrate for the three terminal pathways of aromatic amino acid biosynthesis. This reaction introduces a second double bond into the aromatic ring system. The chain is Chorismate synthase from Trichlorobacter lovleyi (strain ATCC BAA-1151 / DSM 17278 / SZ) (Geobacter lovleyi).